We begin with the raw amino-acid sequence, 96 residues long: Myoglobin (96 aa).

Residues 1-96 enclose the Globin domain; it reads GLSDGEWQLV…AKTKELGFLG (96 aa). Phosphoserine is present on Ser-3. Residue His-61 coordinates nitrite. His-61 contributes to the O2 binding site. Thr-64 carries the phosphothreonine modification.

The protein belongs to the globin family. As to quaternary structure, monomeric.

The protein resides in the cytoplasm. It is found in the sarcoplasm. The enzyme catalyses Fe(III)-heme b-[protein] + nitric oxide + H2O = Fe(II)-heme b-[protein] + nitrite + 2 H(+). It catalyses the reaction H2O2 + AH2 = A + 2 H2O. In terms of biological role, monomeric heme protein which primary function is to store oxygen and facilitate its diffusion within muscle tissues. Reversibly binds oxygen through a pentacoordinated heme iron and enables its timely and efficient release as needed during periods of heightened demand. Depending on the oxidative conditions of tissues and cells, and in addition to its ability to bind oxygen, it also has a nitrite reductase activity whereby it regulates the production of bioactive nitric oxide. Under stress conditions, like hypoxia and anoxia, it also protects cells against reactive oxygen species thanks to its pseudoperoxidase activity. The protein is Myoglobin (MB) of Ailuropoda melanoleuca (Giant panda).